An 878-amino-acid polypeptide reads, in one-letter code: Probable glucan endo-1,3-beta-glucosidase ARB_02077 (878 aa).

The first 27 residues, 1–27, serve as a signal peptide directing secretion; the sequence is MARGLVSSLLLGQLLLVLVGLFSPAGA. Residues asparagine 228, asparagine 257, asparagine 290, and asparagine 297 are each glycosylated (N-linked (GlcNAc...) asparagine). The disordered stretch occupies residues 373-472; the sequence is AGSGSKAKRL…TACPSAPVTK (100 aa). Residues 400–416 show a composition bias toward pro residues; the sequence is APAPQPPAQSTAPPYPI. Residues 433-452 are compositionally biased toward low complexity; it reads VPTRVPTGGVPSGTTGTAPS. Asparagine 505, asparagine 659, asparagine 795, and asparagine 862 each carry an N-linked (GlcNAc...) asparagine glycan.

It belongs to the glycosyl hydrolase 55 family.

It is found in the secreted. The catalysed reaction is Hydrolysis of (1-&gt;3)-beta-D-glucosidic linkages in (1-&gt;3)-beta-D-glucans.. Probable glucan endo-1,3-beta-glucosidase involved in the hydrolysis of fungal cell wall. Classified as a small-oligosaccharide-producing type based its the end products: glucose, laminaribiose or laminaritetraose. This chain is Probable glucan endo-1,3-beta-glucosidase ARB_02077, found in Arthroderma benhamiae (strain ATCC MYA-4681 / CBS 112371) (Trichophyton mentagrophytes).